Consider the following 457-residue polypeptide: Cation efflux system protein CusC (457 aa).

Residues 1–17 form the signal peptide; that stretch reads MSPCKLLPFCVALALTG. Cys18 carries the N-palmitoyl cysteine lipid modification. Residue Cys18 is the site of S-diacylglycerol cysteine attachment.

Belongs to the outer membrane factor (OMF) (TC 1.B.17) family. As to quaternary structure, homotrimer. Component of the cus efflux system composed of CusA, CusB, CusC and CusF.

It localises to the cell outer membrane. Forms pores that allow passive diffusion of cations across the outer membrane. Part of a cation efflux system that mediates resistance to copper and silver. In pathogenic strains it allows the bacteria to invade brain microvascular endothelial cells (BMEC) thus allowing it to cross the blood-brain barrier and cause neonatal meningitis. This is Cation efflux system protein CusC (cusC) from Escherichia coli (strain K12).